Consider the following 327-residue polypeptide: Eukaryotic translation initiation factor 3 subunit I (327 aa).

WD repeat units lie at residues 8 to 49, 51 to 91, 144 to 183, 188 to 227, 229 to 268, and 285 to 324; these read GHDR…GTYD, HNGV…NSVS, SLQT…DIVN, AHKF…CLKT, KAER…GHFE, and GHFG…LKFD.

This sequence belongs to the eIF-3 subunit I family. Component of the eukaryotic translation initiation factor 3 (eIF-3) complex.

It is found in the cytoplasm. In terms of biological role, component of the eukaryotic translation initiation factor 3 (eIF-3) complex, which is involved in protein synthesis of a specialized repertoire of mRNAs and, together with other initiation factors, stimulates binding of mRNA and methionyl-tRNAi to the 40S ribosome. The eIF-3 complex specifically targets and initiates translation of a subset of mRNAs involved in cell proliferation. The sequence is that of Eukaryotic translation initiation factor 3 subunit I from Brugia malayi (Filarial nematode worm).